Consider the following 51-residue polypeptide: Large ribosomal subunit protein bL33 (51 aa).

The protein belongs to the bacterial ribosomal protein bL33 family.

The chain is Large ribosomal subunit protein bL33 from Acidithiobacillus ferrooxidans (strain ATCC 53993 / BNL-5-31) (Leptospirillum ferrooxidans (ATCC 53993)).